We begin with the raw amino-acid sequence, 309 residues long: Putative S-adenosyl-L-methionine-dependent methyltransferase Mflv_0743 (309 aa).

S-adenosyl-L-methionine is bound by residues Asp-134 and 163–164 (DL).

It belongs to the UPF0677 family.

Exhibits S-adenosyl-L-methionine-dependent methyltransferase activity. This Mycolicibacterium gilvum (strain PYR-GCK) (Mycobacterium gilvum (strain PYR-GCK)) protein is Putative S-adenosyl-L-methionine-dependent methyltransferase Mflv_0743.